Reading from the N-terminus, the 495-residue chain is MHEKSLTELRAALTAKECSAVELAQLYLKRIDAANSLNAFIQVDPDLTLAQAKAADALLHTGHAGPLVGLPIAHKDVFVTKGWRSTAGSKMLSNYESPFDATVVARLQNAGMVCVGKTNMDEFAMGSSNENSYFGPVQNPWDVKAVPGGSSGGSAAAVAARLAPAATGTDTGGSIRQPASFSGITGIKPTYGRVSRYGMIAFASSLDQGGPMAQSAADCATLLNAMAGFDERDSTSLVRDDEDYTRYLGKPWKEESAAKPLAGLRIGLPKEYFGAGLADDVRASVDAALKQYEALGATLVDVSLPKTELSIPVYYVIAPAEASSNLSRFDGVRFGHRAAEYRDLLDMYKKSRAEGFGPEVKRRILVGAYVLSHGYYDAYYLQAQKIRRIIAQDFQEAFKQCDVIMGPVAPSVAWDLGAKGDDPVQMYLADIYTLSVSLAGLPGMSVPCGFGAGANAQRPVGLQIIGNYFNEARMLQVADAFQRATDWHRKAPAGV.

Catalysis depends on charge relay system residues Lys-75 and Ser-150. Ser-174 acts as the Acyl-ester intermediate in catalysis.

It belongs to the amidase family. GatA subfamily. In terms of assembly, heterotrimer of A, B and C subunits.

The enzyme catalyses L-glutamyl-tRNA(Gln) + L-glutamine + ATP + H2O = L-glutaminyl-tRNA(Gln) + L-glutamate + ADP + phosphate + H(+). In terms of biological role, allows the formation of correctly charged Gln-tRNA(Gln) through the transamidation of misacylated Glu-tRNA(Gln) in organisms which lack glutaminyl-tRNA synthetase. The reaction takes place in the presence of glutamine and ATP through an activated gamma-phospho-Glu-tRNA(Gln). The protein is Glutamyl-tRNA(Gln) amidotransferase subunit A of Paraburkholderia phytofirmans (strain DSM 17436 / LMG 22146 / PsJN) (Burkholderia phytofirmans).